We begin with the raw amino-acid sequence, 451 residues long: tRNA-2-methylthio-N(6)-dimethylallyladenosine synthase (451 aa).

One can recognise an MTTase N-terminal domain in the interval 10–128 (KKFYTLTFGC…FPQLLEHVMQ (119 aa)). [4Fe-4S] cluster is bound by residues Cys-19, Cys-55, Cys-89, Cys-165, Cys-169, and Cys-172. In terms of domain architecture, Radical SAM core spans 151 to 381 (REDSIKAWVV…ISVQQEISEQ (231 aa)). Residues 384–447 (KDLENTVQRI…SWNLYGEIFE (64 aa)) form the TRAM domain.

Belongs to the methylthiotransferase family. MiaB subfamily. As to quaternary structure, monomer. Requires [4Fe-4S] cluster as cofactor.

It localises to the cytoplasm. It carries out the reaction N(6)-dimethylallyladenosine(37) in tRNA + (sulfur carrier)-SH + AH2 + 2 S-adenosyl-L-methionine = 2-methylsulfanyl-N(6)-dimethylallyladenosine(37) in tRNA + (sulfur carrier)-H + 5'-deoxyadenosine + L-methionine + A + S-adenosyl-L-homocysteine + 2 H(+). Its function is as follows. Catalyzes the methylthiolation of N6-(dimethylallyl)adenosine (i(6)A), leading to the formation of 2-methylthio-N6-(dimethylallyl)adenosine (ms(2)i(6)A) at position 37 in tRNAs that read codons beginning with uridine. The polypeptide is tRNA-2-methylthio-N(6)-dimethylallyladenosine synthase (Natranaerobius thermophilus (strain ATCC BAA-1301 / DSM 18059 / JW/NM-WN-LF)).